We begin with the raw amino-acid sequence, 1388 residues long: Rho-associated protein kinase 2 (1388 aa).

The tract at residues M1 to R26 is disordered. The Protein kinase domain maps to Y92–F354. ATP-binding positions include I98–V106 and K121. D214 serves as the catalytic Proton acceptor. Positions D357–S425 constitute an AGC-kinase C-terminal domain. The interaction with PPP1R12A stretch occupies residues N363 to V784. The interval P373 to L420 is interaction with NPM1. T414 is subject to Phosphothreonine; by ROCK2. The stretch at S439–D1131 forms a coiled coil. Residues T497–T573 enclose the REM-1 domain. Positions N512–E530 are enriched in basic and acidic residues. The disordered stretch occupies residues N512–D532. Phosphotyrosine; by SRC is present on Y722. Positions T979–P1047 constitute a RhoBD domain. Residues T979–P1047 are RHOA binding. Phosphoserine is present on S1137. Residues E1150–P1349 enclose the PH domain. T1212 carries the phosphothreonine modification. Residues G1260–C1315 form a Phorbol-ester/DAG-type zinc finger. The tract at residues V1345–S1388 is disordered. A phosphoserine mark is found at S1362 and S1374. Residues S1362–R1376 show a composition bias toward polar residues.

The protein belongs to the protein kinase superfamily. AGC Ser/Thr protein kinase family. As to quaternary structure, homodimer. Interacts with IRS1. Interacts with RAF1. Interacts with RHOA (activated by GTP), RHOB and RHOC. Interacts with PPP1R12A. Interacts with EP300. Interacts with CHORDC1. Interacts with BRCA2. Interacts with NPM1; this interaction enhances ROCK2 activity. Interacts with SORL1. Interacts with PJVK. The cofactor is Mg(2+). In terms of processing, autophosphorylated. Phosphorylation at Tyr-722 reduces its binding to RHOA and is crucial for focal adhesion dynamics. Dephosphorylation by PTPN11 stimulates its RHOA binding activity. Post-translationally, cleaved by granzyme B during apoptosis. This leads to constitutive activation of the kinase and membrane blebbing. In terms of tissue distribution, highly expressed in brain, heart, lung, liver, stomach, spleen, kidney, testis, muscle, embryo and placenta. Isoform 2 is expressed predominantly in the skeletal muscle.

The protein localises to the cytoplasm. It is found in the cell membrane. It localises to the nucleus. The protein resides in the cytoskeleton. Its subcellular location is the microtubule organizing center. The protein localises to the centrosome. The enzyme catalyses L-seryl-[protein] + ATP = O-phospho-L-seryl-[protein] + ADP + H(+). The catalysed reaction is L-threonyl-[protein] + ATP = O-phospho-L-threonyl-[protein] + ADP + H(+). With respect to regulation, activated by RHOA binding. Inhibited by Y-27632. In terms of biological role, protein kinase which is a key regulator of actin cytoskeleton and cell polarity. Involved in regulation of smooth muscle contraction, actin cytoskeleton organization, stress fiber and focal adhesion formation, neurite retraction, cell adhesion and motility via phosphorylation of ADD1, BRCA2, CNN1, EZR, DPYSL2, EP300, MSN, MYL9/MLC2, NPM1, RDX, PPP1R12A and VIM. Phosphorylates SORL1 and IRF4. Acts as a negative regulator of VEGF-induced angiogenic endothelial cell activation. Positively regulates the activation of p42/MAPK1-p44/MAPK3 and of p90RSK/RPS6KA1 during myogenic differentiation. Plays an important role in the timely initiation of centrosome duplication. Inhibits keratinocyte terminal differentiation. May regulate closure of the eyelids and ventral body wall through organization of actomyosin bundles. Plays a critical role in the regulation of spine and synaptic properties in the hippocampus. Plays a role in placental homeostasis during the perinatal period. Plays an important role in generating the circadian rhythm of the aortic myofilament Ca(2+) sensitivity and vascular contractility by modulating the myosin light chain phosphorylation. The sequence is that of Rho-associated protein kinase 2 (Rock2) from Mus musculus (Mouse).